A 376-amino-acid polypeptide reads, in one-letter code: Succinyl-diaminopimelate desuccinylase (376 aa).

A Zn(2+)-binding site is contributed by His-67. Asp-69 is a catalytic residue. Zn(2+) is bound at residue Asp-100. Residue Glu-134 is the Proton acceptor of the active site. Zn(2+) is bound by residues Glu-135, Glu-163, and His-349.

The protein belongs to the peptidase M20A family. DapE subfamily. Homodimer. Zn(2+) serves as cofactor. Requires Co(2+) as cofactor.

It carries out the reaction N-succinyl-(2S,6S)-2,6-diaminopimelate + H2O = (2S,6S)-2,6-diaminopimelate + succinate. Its pathway is amino-acid biosynthesis; L-lysine biosynthesis via DAP pathway; LL-2,6-diaminopimelate from (S)-tetrahydrodipicolinate (succinylase route): step 3/3. Functionally, catalyzes the hydrolysis of N-succinyl-L,L-diaminopimelic acid (SDAP), forming succinate and LL-2,6-diaminopimelate (DAP), an intermediate involved in the bacterial biosynthesis of lysine and meso-diaminopimelic acid, an essential component of bacterial cell walls. The protein is Succinyl-diaminopimelate desuccinylase of Shewanella woodyi (strain ATCC 51908 / MS32).